The following is a 213-amino-acid chain: Ripening-related protein 3 (213 aa).

The first 32 residues, methionine 1–alanine 32, serve as a signal peptide directing secretion.

Belongs to the kiwellin family.

Its subcellular location is the secreted. This chain is Ripening-related protein 3, found in Oryza sativa subsp. japonica (Rice).